The chain runs to 271 residues: 2,3,4,5-tetrahydropyridine-2,6-dicarboxylate N-succinyltransferase (271 aa).

Belongs to the transferase hexapeptide repeat family.

It localises to the cytoplasm. It carries out the reaction (S)-2,3,4,5-tetrahydrodipicolinate + succinyl-CoA + H2O = (S)-2-succinylamino-6-oxoheptanedioate + CoA. The protein operates within amino-acid biosynthesis; L-lysine biosynthesis via DAP pathway; LL-2,6-diaminopimelate from (S)-tetrahydrodipicolinate (succinylase route): step 1/3. This chain is 2,3,4,5-tetrahydropyridine-2,6-dicarboxylate N-succinyltransferase, found in Coxiella burnetii (strain CbuG_Q212) (Coxiella burnetii (strain Q212)).